A 125-amino-acid chain; its full sequence is DNA-directed RNA polymerase subunit omega (125 aa).

Belongs to the RNA polymerase subunit omega family. As to quaternary structure, the RNAP catalytic core consists of 2 alpha, 1 beta, 1 beta' and 1 omega subunit. When a sigma factor is associated with the core the holoenzyme is formed, which can initiate transcription.

The enzyme catalyses RNA(n) + a ribonucleoside 5'-triphosphate = RNA(n+1) + diphosphate. Promotes RNA polymerase assembly. Latches the N- and C-terminal regions of the beta' subunit thereby facilitating its interaction with the beta and alpha subunits. The polypeptide is DNA-directed RNA polymerase subunit omega (Zymomonas mobilis subsp. mobilis (strain ATCC 31821 / ZM4 / CP4)).